The primary structure comprises 278 residues: MRHDGPMHVQPGVGLQSDTSSSTGTGSGPADEPEAEKSAWGYLPPTAFRSRHSALSSIQQQTWERRWPQLGRQATAHSQPSARGHEPIDPIDARAWFGREAPVVLEIGCGSGTSTLAMAQAEPNVDVIAVEVYRRGLAQLLCAIDRADLQRINIRLIRGNGIDVLRDLIAPESLTGVRVFFPDPWPKARHHKRRLIQPSTVVLIADRLLPGGVFHAATDHPGYAEHIIAAGDAEPALARVDPGVDSLPVSVVRPTTKYEMKAHNAGSSINELIWKKQR.

The interval 1–42 (MRHDGPMHVQPGVGLQSDTSSSTGTGSGPADEPEAEKSAWGY) is disordered. S-adenosyl-L-methionine is bound by residues Glu-106, Glu-131, Asn-160, and Asp-183. Residue Asp-183 is part of the active site. Residues Lys-187, Asp-219, and 256 to 259 (TKYE) contribute to the substrate site.

Belongs to the class I-like SAM-binding methyltransferase superfamily. TrmB family.

It catalyses the reaction guanosine(46) in tRNA + S-adenosyl-L-methionine = N(7)-methylguanosine(46) in tRNA + S-adenosyl-L-homocysteine. Its pathway is tRNA modification; N(7)-methylguanine-tRNA biosynthesis. Functionally, catalyzes the formation of N(7)-methylguanine at position 46 (m7G46) in tRNA. This is tRNA (guanine-N(7)-)-methyltransferase from Mycobacterium ulcerans (strain Agy99).